The following is a 122-amino-acid chain: UPF0382 membrane protein SE_0353 (122 aa).

The next 4 helical transmembrane spans lie at 3-23, 46-66, 69-89, and 98-118; these read VFIILGALNAMMAVGTGAFGA, MYHGLGLLVIGLISGTTSINV, AGWLLFFGIVFFSGSLYFLAL, and ITPIGGVLFIIGWLVLVIATL.

This sequence belongs to the UPF0382 family.

Its subcellular location is the cell membrane. This chain is UPF0382 membrane protein SE_0353, found in Staphylococcus epidermidis (strain ATCC 12228 / FDA PCI 1200).